A 180-amino-acid chain; its full sequence is Large ribosomal subunit protein uL6 (180 aa).

The protein belongs to the universal ribosomal protein uL6 family. Part of the 50S ribosomal subunit.

Functionally, this protein binds to the 23S rRNA, and is important in its secondary structure. It is located near the subunit interface in the base of the L7/L12 stalk, and near the tRNA binding site of the peptidyltransferase center. This is Large ribosomal subunit protein uL6 from Thermus thermophilus (strain ATCC BAA-163 / DSM 7039 / HB27).